Reading from the N-terminus, the 209-residue chain is PRA1 family protein A1 (209 aa).

Transmembrane regions (helical) follow at residues 51 to 73, 77 to 99, 144 to 164, and 166 to 186; these read LYYYRTNYFIMIVVILGLGVLTR, IFAALLTALSLAFLNDSFAGSFS, VFVLTCSLVSFALWYISSGLL, and VSVALLIAHLATILHASLRTP.

This sequence belongs to the PRA1 family.

It is found in the endoplasmic reticulum membrane. Its function is as follows. May be involved in both secretory and endocytic intracellular trafficking in the endosomal/prevacuolar compartments. This is PRA1 family protein A1 (PRA1A1) from Arabidopsis thaliana (Mouse-ear cress).